Reading from the N-terminus, the 217-residue chain is uncharacterized protein (217 aa).

The N-terminal stretch at 1–32 is a signal peptide; it reads MPITKATPLFLRYRLKGFVFLTLLLVQGVFTA. C33 is lipidated: N-palmitoyl cysteine. C33 carries the S-diacylglycerol cysteine lipid modification.

This sequence belongs to the MG067/MG068/MG395 family.

Its subcellular location is the cell membrane. This is an uncharacterized protein from Mycoplasma pneumoniae (strain ATCC 29342 / M129 / Subtype 1) (Mycoplasmoides pneumoniae).